The following is a 399-amino-acid chain: Elongation factor Tu (399 aa).

The region spanning 10-204 (KPHVNIGTIG…AVDASIPEPE (195 aa)) is the tr-type G domain. The G1 stretch occupies residues 19-26 (GHVDHGKT). Residue 19–26 (GHVDHGKT) participates in GTP binding. Thr26 contributes to the Mg(2+) binding site. The segment at 60-64 (GITIN) is G2. The G3 stretch occupies residues 81 to 84 (DCPG). GTP is bound by residues 81 to 85 (DCPGH) and 136 to 139 (NKCD). A G4 region spans residues 136–139 (NKCD). The segment at 174 to 176 (SGL) is G5.

The protein belongs to the TRAFAC class translation factor GTPase superfamily. Classic translation factor GTPase family. EF-Tu/EF-1A subfamily. In terms of assembly, monomer.

It is found in the cytoplasm. The catalysed reaction is GTP + H2O = GDP + phosphate + H(+). In terms of biological role, GTP hydrolase that promotes the GTP-dependent binding of aminoacyl-tRNA to the A-site of ribosomes during protein biosynthesis. The polypeptide is Elongation factor Tu (Prochlorococcus marinus (strain MIT 9313)).